The sequence spans 384 residues: H-2 class I histocompatibility antigen, TLA(B) alpha chain (384 aa).

An N-terminal signal peptide occupies residues 1 to 26 (MRMGTPVPGTLLILLAASQGQTQTCP). An alpha-1 region spans residues 27–116 (GSHSLRYFYT…MLDYYNLSQN (90 aa)). At 27 to 314 (GSHSLRYFYT…TSMPNRTTVR (288 aa)) the chain is on the extracellular side. 3 N-linked (GlcNAc...) asparagine glycosylation sites follow: N63, N112, and N116. The interval 117–208 (GSHTIQVMYG…ENRKKTQECT (92 aa)) is alpha-2. Intrachain disulfides connect C127–C190 and C229–C285. The tract at residues 209-300 (DPPKTHVTHH…GLPEPLTLRW (92 aa)) is alpha-3. Positions 211-299 (PKTHVTHHPR…EGLPEPLTLR (89 aa)) constitute an Ig-like C1-type domain. Residues 301–314 (EPPQTSMPNRTTVR) are connecting peptide. N309 carries N-linked (GlcNAc...) asparagine glycosylation. The chain crosses the membrane as a helical span at residues 315–334 (ALLGAMIILGFMSGSVMMWM). Residues 335–384 (RKNNGGNGDDNTAAYQNEREHLSLDPRAESEALGVEAGMKDLPSAPPLVS) lie on the Cytoplasmic side of the membrane. The segment covering 354 to 364 (EHLSLDPRAES) has biased composition (basic and acidic residues). Residues 354–384 (EHLSLDPRAESEALGVEAGMKDLPSAPPLVS) are disordered.

It belongs to the MHC class I family. In terms of assembly, heterodimer of an alpha chain and a beta chain (beta-2-microglobulin). In terms of tissue distribution, TL antigens are only expressed on thymocytes, activated T-lymphocytes and on some thymic leukemias.

It localises to the membrane. In terms of biological role, involved in the presentation of foreign antigens to the immune system. The polypeptide is H-2 class I histocompatibility antigen, TLA(B) alpha chain (H2-T3) (Mus musculus (Mouse)).